Reading from the N-terminus, the 104-residue chain is UPF0235 protein M446_3939 (104 aa).

It belongs to the UPF0235 family.

The sequence is that of UPF0235 protein M446_3939 from Methylobacterium sp. (strain 4-46).